Consider the following 174-residue polypeptide: MLLALRRKAIHGIRFSSGKCGQNLSGSTIGPKFTSDKEVEEFLSKSTWDVREYVPSSVDEKLIPSEETVVRLLKISGLPIKNIDQIQIRLANQLSFINRLHNLPVDENINPNHARIIERNPTPLDYEGLIKGIASQQKSDSLGEISGSWDPTKTAAVKRDGFFILREGLLKGRD.

This sequence belongs to the GatF family. Subunit of the heterotrimeric GatFAB amidotransferase (AdT) complex, composed of A, B and F subunits.

The protein resides in the mitochondrion inner membrane. It carries out the reaction L-glutamyl-tRNA(Gln) + L-glutamine + ATP + H2O = L-glutaminyl-tRNA(Gln) + L-glutamate + ADP + phosphate + H(+). Allows the formation of correctly charged Gln-tRNA(Gln) through the transamidation of misacylated Glu-tRNA(Gln) in the mitochondria. The reaction takes place in the presence of glutamine and ATP through an activated gamma-phospho-Glu-tRNA(Gln). Required for proper protein synthesis within the mitochondrion. In Kluyveromyces lactis (strain ATCC 8585 / CBS 2359 / DSM 70799 / NBRC 1267 / NRRL Y-1140 / WM37) (Yeast), this protein is Glutamyl-tRNA(Gln) amidotransferase subunit F, mitochondrial.